A 449-amino-acid polypeptide reads, in one-letter code: MADHDIHIIGGGLAGSEAAWQLAEAGYHVRLSEMRGGGDMTPAHQGDGLAEMVCSNSFRSDDGDSNAVGLLHREMRALGSIIMREADATKVPAGSALAVDRDLFSGGVTRALSEHPNITIVRERIDKLPTEGLTIVATGPLTAASLAESIGAATGKDALAFFDAIAPIVYRDSIDMDIAWMASRWDRVGPIGDGRDYINCPLDKDQYYAFVQGLLDGEKTEFKDWEKDTPYFEGCMPIEVMAERGVETLRFGPMKGVGLDNPRTGRWPYAVVQLRQDNALGTLWNMVGFQTKLKHAEQVRLFRTIPGLEKAEFARLGGLHRNSFIRSPELLDRQLRLKSAPHIRFAGQITGCEGYVESAAIGLVAARFAAAELGGRALPPPPPETALGALLCHITGGADASSYQPMNVNFGLFPPLADDVRKKDRKLGYTQRAGKALAEWMTVAAGVAA.

10–15 (GGGLAG) serves as a coordination point for FAD.

The protein belongs to the MnmG family. TrmFO subfamily. FAD serves as cofactor.

It localises to the cytoplasm. The enzyme catalyses uridine(54) in tRNA + (6R)-5,10-methylene-5,6,7,8-tetrahydrofolate + NADH + H(+) = 5-methyluridine(54) in tRNA + (6S)-5,6,7,8-tetrahydrofolate + NAD(+). It carries out the reaction uridine(54) in tRNA + (6R)-5,10-methylene-5,6,7,8-tetrahydrofolate + NADPH + H(+) = 5-methyluridine(54) in tRNA + (6S)-5,6,7,8-tetrahydrofolate + NADP(+). Functionally, catalyzes the folate-dependent formation of 5-methyl-uridine at position 54 (M-5-U54) in all tRNAs. In Sphingopyxis alaskensis (strain DSM 13593 / LMG 18877 / RB2256) (Sphingomonas alaskensis), this protein is Methylenetetrahydrofolate--tRNA-(uracil-5-)-methyltransferase TrmFO.